The following is a 354-amino-acid chain: Rhodopsin (354 aa).

Topologically, residues 1 to 36 (MNGTEGPMFYVPMSNATGVVKSPYDYPQYYLVAPWA) are extracellular. Residues Asn-2 and Asn-15 are each glycosylated (N-linked (GlcNAc...) asparagine). Residues 37 to 61 (YGCLAAYMFFLIITGFPINFLTLYV) traverse the membrane as a helical segment. The Cytoplasmic segment spans residues 62 to 73 (TIEHKKLRTPLN). A helical membrane pass occupies residues 74-96 (YILLNLAISDLFMVFGGFTTTMY). Topologically, residues 97-110 (TSLHGYFVFGRIGC) are extracellular. The cysteines at positions 110 and 187 are disulfide-linked. A helical transmembrane segment spans residues 111–133 (NLEGFFATLGGEMGLWSLVVLAF). The 'Ionic lock' involved in activated form stabilization signature appears at 134–136 (ERW). The Cytoplasmic segment spans residues 134 to 152 (ERWMVVCKPVSNFRFGENH). The chain crosses the membrane as a helical span at residues 153–173 (AIMGVVFTWFMACTCAVPPLV). Over 174 to 202 (GWSRYIPEGMQCSCGVDYYTRAPGYNNES) the chain is Extracellular. A helical membrane pass occupies residues 203–224 (FVIYMFLVHFIIPLIVIFFCYG). At 225–252 (RLVCTVKDAAAQQQESETTQRAEREVTR) the chain is on the cytoplasmic side. Residues 253-274 (MVVIMVIGFLICWIPYASVAWY) form a helical membrane-spanning segment. Over 275–286 (IFTHQGSEFGPV) the chain is Extracellular. The chain crosses the membrane as a helical span at residues 287-308 (FMTVPAFFAKSAAVYNPCIYIC). Lys-296 carries the post-translational modification N6-(retinylidene)lysine. Over 309-354 (MNKQFRHCMITTLCCGKNPFEEEEGASTTASKTEASSVSSSSVSPA) the chain is Cytoplasmic. S-palmitoyl cysteine attachment occurs at residues Cys-322 and Cys-323. Residues 333–354 (GASTTASKTEASSVSSSSVSPA) are disordered. The span at 334–354 (ASTTASKTEASSVSSSSVSPA) shows a compositional bias: low complexity.

Belongs to the G-protein coupled receptor 1 family. Opsin subfamily. Post-translationally, phosphorylated on some or all of the serine and threonine residues present in the C-terminal region. In terms of processing, contains one covalently linked retinal chromophore.

It is found in the membrane. The protein localises to the cell projection. The protein resides in the cilium. Its subcellular location is the photoreceptor outer segment. Its function is as follows. Photoreceptor required for image-forming vision at low light intensity. While most salt water fish species use retinal as chromophore, most freshwater fish use 3-dehydroretinal, or a mixture of retinal and 3-dehydroretinal. Light-induced isomerization of 11-cis to all-trans retinal triggers a conformational change that activates signaling via G-proteins. Subsequent receptor phosphorylation mediates displacement of the bound G-protein alpha subunit by arrestin and terminates signaling. This is Rhodopsin (rho) from Cyprinus carpio (Common carp).